The following is a 282-amino-acid chain: Large ribosomal subunit protein uL2 (282 aa).

2 disordered regions span residues 31-54 (KRLT…TRHI) and 223-282 (LAMN…NTQR). Basic residues-rich tracts occupy residues 34–54 (TKPV…TRHI) and 270–282 (VTRR…NTQR).

The protein belongs to the universal ribosomal protein uL2 family. Part of the 50S ribosomal subunit. Forms a bridge to the 30S subunit in the 70S ribosome.

In terms of biological role, one of the primary rRNA binding proteins. Required for association of the 30S and 50S subunits to form the 70S ribosome, for tRNA binding and peptide bond formation. It has been suggested to have peptidyltransferase activity; this is somewhat controversial. Makes several contacts with the 16S rRNA in the 70S ribosome. The polypeptide is Large ribosomal subunit protein uL2 (Anaeromyxobacter dehalogenans (strain 2CP-1 / ATCC BAA-258)).